The primary structure comprises 478 residues: uncharacterized protein (478 aa).

The region spanning R174 to I366 is the ATP-grasp domain. G214 to G219 lines the ATP pocket. R339 is an active-site residue.

This is an uncharacterized protein from Sinorhizobium fredii (strain NBRC 101917 / NGR234).